A 445-amino-acid polypeptide reads, in one-letter code: SVP1-like protein 2 (445 aa).

WD repeat units follow at residues 218–258 (AHKA…LLKE) and 263–302 (LDRA…EGTL). The disordered stretch occupies residues 301–321 (TLNPANPEDHQSSGSNGHIKA). Residues 312–321 (SSGSNGHIKA) show a composition bias toward polar residues.

Belongs to the WD repeat PROPPIN family.

Its subcellular location is the vacuole membrane. It is found in the cytoplasmic vesicle membrane. In terms of biological role, involved in mitochondrial or peroxisomal functions and amino acid signaling pathways. The polypeptide is SVP1-like protein 2 (HSV2) (Candida glabrata (strain ATCC 2001 / BCRC 20586 / JCM 3761 / NBRC 0622 / NRRL Y-65 / CBS 138) (Yeast)).